Reading from the N-terminus, the 335-residue chain is RVS161-like protein RVS162 (335 aa).

The BAR domain occupies 17–310; the sequence is VMLKTGHIEQ…LDAQTRQDYI (294 aa). A coiled-coil region spans residues 30 to 56; it reads KEYEFQEKRYRTMEENSIKLQKNLRLY. The interval 105–127 is disordered; sequence HEEEGEEKEEEENDNTTTTTTTT. Residues 107–118 are compositionally biased toward acidic residues; that stretch reads EEGEEKEEEEND. Residues 222 to 259 are a coiled coil; that stretch reads TNIIELNHNQYEEKLKIYNQELTEVESKYVEINNQLLI.

The protein resides in the cytoplasm. It localises to the cytoskeleton. Functionally, component of a cytoskeletal structure that is required for membrane curvature. This is RVS161-like protein RVS162 from Candida albicans (strain SC5314 / ATCC MYA-2876) (Yeast).